The primary structure comprises 42 residues: Potassium channel toxin gamma-KTx 3.4 (42 aa).

Intrachain disulfides connect Cys5/Cys23, Cys11/Cys34, Cys20/Cys39, and Cys24/Cys41.

The protein belongs to the ergtoxin family. Gamma-KTx 3 subfamily. In terms of tissue distribution, expressed by the venom gland.

It is found in the secreted. Functionally, blocks Kv11/ERG potassium channels. This Centruroides gracilis (Slenderbrown scorpion) protein is Potassium channel toxin gamma-KTx 3.4.